The chain runs to 509 residues: MNNEEDLLQEDSTRDEGNETEANSMNTLRRTRKKVTKPYVCSTEVGETDMSNSNDCMRDSSQILTPPQLSSRMKHIRQAMAKNRLQFVRFEATDLHGVSRSKTIPAHFFQEKVSHGVCMPRGYLEVIPNPKDNEMNNIRATCFNSDIVLMPELSTFRVLPWADRTARVICDTFTVTGEPLLTSPRYIAKRQLSHLQASGFSLLSAFIYDFCIFGVPEILNSKIISFPALTFLNNHDQPFMQELVDGLYHTGANVESFSSSTRPGQMEISFLPEFGISSADNAFTLRTGVKEVARKYNYIASFFIETGFCDSGILSHSLWDVDRKKNMFCSTSGTEQLTITGKKWLAGLLKHSAALSCLMAPSVSCRKRYSKDRKDLKKSVPTTWGYNDNSCIFNIKCHGEKGTRIENKLGSATANPYLVLAATVAAGLDGLHSSNEVLAGPDESTDFYQVEPSEIPLKLEDALVALEEDQCLRQALGETFIRYFVAMKKYELENEEIAAERNKFLEYFI.

Residues 1–34 (MNNEEDLLQEDSTRDEGNETEANSMNTLRRTRKK) form a disordered region. Residues 83–177 (NRLQFVRFEA…VICDTFTVTG (95 aa)) form the GS beta-grasp domain. The GS catalytic domain maps to 184–509 (PRYIAKRQLS…ERNKFLEYFI (326 aa)).

It belongs to the glutamine synthetase family. In terms of assembly, dodecamer. Interacts with BFSP2 and VIM. Abundantly expressed in lens.

Its function is as follows. May act as a component of the cytoskeleton or as a chaperone for the reorganization of intermediate filament proteins during terminal differentiation in the lens. Does not seem to have enzymatic activity. In Homo sapiens (Human), this protein is Lengsin (LGSN).